We begin with the raw amino-acid sequence, 136 residues long: MSVSFLRSKFSLKASVFAFFVLFLFCLKIILVLFRNFGKRFKHFLFNQTSLYLLVRLFQKTEIVWNLIANIHFFIKTQIQNLGIRLSRESISNETFQAVKLFHVNNLGLQEQEVINSKLSDYFCFFKYRNLLFVNW.

A helical membrane pass occupies residues 14-34 (ASVFAFFVLFLFCLKIILVLF).

Its subcellular location is the membrane. This is an uncharacterized protein from Mycoplasma genitalium (strain ATCC 33530 / DSM 19775 / NCTC 10195 / G37) (Mycoplasmoides genitalium).